The chain runs to 351 residues: Probable sugar phosphate/phosphate translocator At5g11230 (351 aa).

10 consecutive transmembrane segments (helical) span residues 15–35, 49–69, 89–109, 113–133, 141–161, 165–185, 205–225, 236–256, 263–283, and 286–306; these read IVLS…VIVY, FPIS…FLII, VVPI…AYIY, SFIQ…GVLF, DTMM…YGEA, VWGV…LVLI, VAPC…FPVL, AIFG…FLLV, TMNV…WSVI, and TVTP…AYYN. The 119-residue stretch at 38–156 folds into the EamA domain; that stretch reads YILDKKMYNW…LSISFGVAIA (119 aa). A disordered region spans residues 321-351; sequence KKIQQADEESGRLLEEREGDVEGKKNDQSGN.

This sequence belongs to the TPT transporter family. TPT (TC 2.A.7.9) subfamily.

It is found in the membrane. The chain is Probable sugar phosphate/phosphate translocator At5g11230 from Arabidopsis thaliana (Mouse-ear cress).